The primary structure comprises 432 residues: Adenylosuccinate synthetase (432 aa).

Residues 11-17 (GDEGKGK) and 39-41 (GHT) each bind GTP. Catalysis depends on D12, which acts as the Proton acceptor. Mg(2+) contacts are provided by D12 and G39. IMP contacts are provided by residues 12 to 15 (DEGK), 37 to 40 (NAGH), T134, R148, N230, T245, and R309. The active-site Proton donor is H40. 305 to 311 (VTTGRKR) contacts substrate. Residues R311, 337–339 (KLD), and 419–421 (GTG) contribute to the GTP site.

This sequence belongs to the adenylosuccinate synthetase family. In terms of assembly, homodimer. Requires Mg(2+) as cofactor.

The protein localises to the cytoplasm. The catalysed reaction is IMP + L-aspartate + GTP = N(6)-(1,2-dicarboxyethyl)-AMP + GDP + phosphate + 2 H(+). It participates in purine metabolism; AMP biosynthesis via de novo pathway; AMP from IMP: step 1/2. Plays an important role in the de novo pathway and in the salvage pathway of purine nucleotide biosynthesis. Catalyzes the first committed step in the biosynthesis of AMP from IMP. This Candida glabrata (strain ATCC 2001 / BCRC 20586 / JCM 3761 / NBRC 0622 / NRRL Y-65 / CBS 138) (Yeast) protein is Adenylosuccinate synthetase.